The chain runs to 427 residues: Serine--tRNA ligase (427 aa).

231–233 (TAE) is a binding site for L-serine. 262–264 (RSE) is a binding site for ATP. E285 provides a ligand contact to L-serine. 349-352 (EISS) is an ATP binding site. S385 contributes to the L-serine binding site.

This sequence belongs to the class-II aminoacyl-tRNA synthetase family. Type-1 seryl-tRNA synthetase subfamily. As to quaternary structure, homodimer. The tRNA molecule binds across the dimer.

Its subcellular location is the cytoplasm. The enzyme catalyses tRNA(Ser) + L-serine + ATP = L-seryl-tRNA(Ser) + AMP + diphosphate + H(+). The catalysed reaction is tRNA(Sec) + L-serine + ATP = L-seryl-tRNA(Sec) + AMP + diphosphate + H(+). It functions in the pathway aminoacyl-tRNA biosynthesis; selenocysteinyl-tRNA(Sec) biosynthesis; L-seryl-tRNA(Sec) from L-serine and tRNA(Sec): step 1/1. In terms of biological role, catalyzes the attachment of serine to tRNA(Ser). Is also able to aminoacylate tRNA(Sec) with serine, to form the misacylated tRNA L-seryl-tRNA(Sec), which will be further converted into selenocysteinyl-tRNA(Sec). The protein is Serine--tRNA ligase of Sinorhizobium fredii (strain NBRC 101917 / NGR234).